The sequence spans 763 residues: Translation initiation factor IF-2, chloroplastic (763 aa).

Disordered stretches follow at residues 1–22, 52–122, and 149–168; these read MFLN…NNSS, IDKS…SNSA, and NNKI…DQSI. Positions 13 to 22 are enriched in low complexity; the sequence is SSYSTNNNSS. Basic and acidic residues predominate over residues 73-92; it reads RIDKKNKNFNKAHDLLDNKK. Over residues 93–104 the composition is skewed to basic residues; it reads NKNRQRKKIKNK. Residues 151–168 show a composition bias toward polar residues; sequence KIPQQKKQQVASSIDQSI. Residues 261-429 enclose the tr-type G domain; that stretch reads NRPPVVTILG…ILLLAELENL (169 aa). GTP contacts are provided by residues 270–277, 316–320, and 370–373; these read GHVDHGKT, DTPGH, and SKID.

It belongs to the TRAFAC class translation factor GTPase superfamily. Classic translation factor GTPase family. IF-2 subfamily.

It is found in the plastid. Its subcellular location is the chloroplast. Functionally, one of the essential components for the initiation of protein synthesis. Protects formylmethionyl-tRNA from spontaneous hydrolysis and promotes its binding to the 30S ribosomal subunits. Also involved in the hydrolysis of GTP during the formation of the 70S ribosomal complex. This chain is Translation initiation factor IF-2, chloroplastic (infB), found in Porphyra purpurea (Red seaweed).